The sequence spans 549 residues: 65-kDa microtubule-associated protein 9 (549 aa).

Coiled-coil stretches lie at residues 36–123, 160–199, and 459–492; these read IEIE…ERKI, SLRKLEELHRELYTLQEQKRNRVKQIQDNIRTLESLCSVL, and GNRLLSMLEEYTELREEKEQERRRKRDLKKHQGQ. Positions 474–549 are disordered; the sequence is EEKEQERRRK…SFSTPLSRHG (76 aa). The segment covering 481 to 490 has biased composition (basic residues); the sequence is RRKRDLKKHQ. Phosphoserine occurs at positions 501 and 546. The span at 514–549 shows a compositional bias: polar residues; the sequence is VSTNKRFVSSPHTPQTDSPHSAKSNQSFSTPLSRHG.

Belongs to the MAP65/ASE1 family. In terms of assembly, forms dimer. Binds to microtubules (MT).

The protein localises to the nucleus. It localises to the cytoplasm. Its subcellular location is the cytoskeleton. It is found in the spindle pole. The chain is 65-kDa microtubule-associated protein 9 (MAP65-9) from Arabidopsis thaliana (Mouse-ear cress).